Consider the following 401-residue polypeptide: Cytochrome P450 BJ-1 (401 aa).

Cys350 contributes to the heme binding site.

It belongs to the cytochrome P450 family. It depends on heme as a cofactor.

Its function is as follows. Cytochromes P450 are a group of heme-thiolate monooxygenases. They oxidize a variety of structurally unrelated compounds, including steroids, fatty acids, and xenobiotics. The chain is Cytochrome P450 BJ-1 (cyp112) from Bradyrhizobium diazoefficiens (strain JCM 10833 / BCRC 13528 / IAM 13628 / NBRC 14792 / USDA 110).